The chain runs to 238 residues: MSKIEISNDTRIIRHRTPARISHWMLVICFFMTMFTGVAFFFPDFAWLTEILGTPQIARAIHPFTGILMFFAFIYLALLYWDHNIPEKNDIRWAKGVIEVLKGNEHAVADNGKYNLGQKMLFWTLNLAMVTLLVTGIIMWRQYFSHYFSIPVLRIAILLHSASAFMLFTGILVHIYMAFWVKGSIRGIVEGWVTVRWAKKHHPRWYREEVLSKLEEDLLNEQSGKVGKTKVLFKGFGK.

The heme b site is built by His23 and His62. Helical transmembrane passes span 23–43 (HWMLVICFFMTMFTGVAFFFP), 60–80 (AIHPFTGILMFFAFIYLALLY), 120–140 (MLFWTLNLAMVTLLVTGIIMW), and 155–175 (IAILLHSASAFMLFTGILVHI). 2 residues coordinate heme b: His160 and His174.

This sequence belongs to the formate dehydrogenase gamma subunit family. As to quaternary structure, formate dehydrogenase is a membrane-bound complex, formed by subunits alpha, beta and gamma. Heme serves as cofactor.

Its subcellular location is the cell membrane. In terms of biological role, allows to use formate as major electron donor during anaerobic respiration. Subunit gamma is probably the cytochrome b556(FDO) component of the formate dehydrogenase. This chain is Formate dehydrogenase, cytochrome b556 subunit (fdxI), found in Haemophilus influenzae (strain ATCC 51907 / DSM 11121 / KW20 / Rd).